We begin with the raw amino-acid sequence, 183 residues long: Small ribosomal subunit protein uS4c (183 aa).

In terms of domain architecture, S4 RNA-binding spans 82-143; the sequence is MRLDNILFRL…KQRSKALIQN (62 aa).

Belongs to the universal ribosomal protein uS4 family. Part of the 30S ribosomal subunit. Contacts protein S5. The interaction surface between S4 and S5 is involved in control of translational fidelity.

It localises to the plastid. Its subcellular location is the chloroplast. Functionally, one of the primary rRNA binding proteins, it binds directly to 16S rRNA where it nucleates assembly of the body of the 30S subunit. In terms of biological role, with S5 and S12 plays an important role in translational accuracy. In Babiana stricta (Baboon flower), this protein is Small ribosomal subunit protein uS4c (rps4).